Here is a 303-residue protein sequence, read N- to C-terminus: Acetylglutamate kinase (303 aa).

Residues 73-74 (GG), Arg-95, and Asn-194 contribute to the substrate site.

Belongs to the acetylglutamate kinase family. ArgB subfamily.

Its subcellular location is the cytoplasm. The enzyme catalyses N-acetyl-L-glutamate + ATP = N-acetyl-L-glutamyl 5-phosphate + ADP. Its pathway is amino-acid biosynthesis; L-arginine biosynthesis; N(2)-acetyl-L-ornithine from L-glutamate: step 2/4. Its function is as follows. Catalyzes the ATP-dependent phosphorylation of N-acetyl-L-glutamate. The sequence is that of Acetylglutamate kinase from Saccharopolyspora erythraea (strain ATCC 11635 / DSM 40517 / JCM 4748 / NBRC 13426 / NCIMB 8594 / NRRL 2338).